The following is a 177-amino-acid chain: RNA pyrophosphohydrolase (177 aa).

The region spanning 6 to 149 is the Nudix hydrolase domain; sequence GYRPNVGIVI…KRDVYRRVMK (144 aa). A Nudix box motif is present at residues 38–59; it reads GGINAGETAEQAMYRELFEEVG.

The protein belongs to the Nudix hydrolase family. RppH subfamily. Requires a divalent metal cation as cofactor.

In terms of biological role, accelerates the degradation of transcripts by removing pyrophosphate from the 5'-end of triphosphorylated RNA, leading to a more labile monophosphorylated state that can stimulate subsequent ribonuclease cleavage. The sequence is that of RNA pyrophosphohydrolase from Edwardsiella ictaluri (strain 93-146).